The primary structure comprises 314 residues: Ribosomal protein L11 methyltransferase (314 aa).

S-adenosyl-L-methionine contacts are provided by T163, G184, D206, and N248.

It belongs to the methyltransferase superfamily. PrmA family.

Its subcellular location is the cytoplasm. It catalyses the reaction L-lysyl-[protein] + 3 S-adenosyl-L-methionine = N(6),N(6),N(6)-trimethyl-L-lysyl-[protein] + 3 S-adenosyl-L-homocysteine + 3 H(+). Functionally, methylates ribosomal protein L11. In Lactobacillus acidophilus (strain ATCC 700396 / NCK56 / N2 / NCFM), this protein is Ribosomal protein L11 methyltransferase.